The sequence spans 148 residues: D-aminoacyl-tRNA deacylase (148 aa).

The Gly-cisPro motif, important for rejection of L-amino acids signature appears at 137-138; it reads GP.

Belongs to the DTD family. As to quaternary structure, homodimer.

It is found in the cytoplasm. The catalysed reaction is glycyl-tRNA(Ala) + H2O = tRNA(Ala) + glycine + H(+). The enzyme catalyses a D-aminoacyl-tRNA + H2O = a tRNA + a D-alpha-amino acid + H(+). Its function is as follows. An aminoacyl-tRNA editing enzyme that deacylates mischarged D-aminoacyl-tRNAs. Also deacylates mischarged glycyl-tRNA(Ala), protecting cells against glycine mischarging by AlaRS. Acts via tRNA-based rather than protein-based catalysis; rejects L-amino acids rather than detecting D-amino acids in the active site. By recycling D-aminoacyl-tRNA to D-amino acids and free tRNA molecules, this enzyme counteracts the toxicity associated with the formation of D-aminoacyl-tRNA entities in vivo and helps enforce protein L-homochirality. The chain is D-aminoacyl-tRNA deacylase from Lacticaseibacillus casei (strain BL23) (Lactobacillus casei).